We begin with the raw amino-acid sequence, 1793 residues long: Brefeldin A-inhibited guanine nucleotide-exchange protein 2 (1793 aa).

Ala-2 bears the N-acetylalanine mark. 3 disordered regions span residues 45 to 71 (NSLQKSPPPSSSAATDSESESSVPGPL), 266 to 299 (TMSGSGSGSGSGGQDGAYGTTTVETTNPTDLLDS), and 579 to 606 (GSPQLANGNADESADGSDTYSESSGGTS). The segment covering 55–66 (SSAATDSESESS) has biased composition (low complexity). The segment covering 270–281 (SGSGSGSGGQDG) has biased composition (gly residues). Polar residues-rich tracts occupy residues 284–294 (GTTTVETTNPT) and 594–605 (GSDTYSESSGGT). Ser-595 bears the Phosphoserine mark. The 188-residue stretch at 610 to 797 (AIEQRRAYKL…RSLYERITKH (188 aa)) folds into the SEC7 domain. The active site involves Glu-712. Residues 1311–1327 (NKYKGTSGKIPQSSLHS) are compositionally biased toward polar residues. A disordered region spans residues 1311–1333 (NKYKGTSGKIPQSSLHSGKSGKQ).

As to quaternary structure, homodimer.

It localises to the cytoplasm. It is found in the cytosol. The protein localises to the membrane. Inhibited by brefeldin A. Its function is as follows. Activates the ARF proteins by exchanging bound GDP for free GTP. Plays a role in vesicular protein sorting. The polypeptide is Brefeldin A-inhibited guanine nucleotide-exchange protein 2 (BIG2) (Arabidopsis thaliana (Mouse-ear cress)).